Consider the following 148-residue polypeptide: UPF0260 protein YE2365 (148 aa).

Belongs to the UPF0260 family.

The protein is UPF0260 protein YE2365 of Yersinia enterocolitica serotype O:8 / biotype 1B (strain NCTC 13174 / 8081).